The sequence spans 341 residues: Glycerol-3-phosphate dehydrogenase [NAD(P)+] (341 aa).

NADPH-binding residues include S14, F15, R35, and K108. Residues K108 and G136 each contribute to the sn-glycerol 3-phosphate site. Residue A140 coordinates NADPH. The sn-glycerol 3-phosphate site is built by K191, D244, S254, R255, and N256. The Proton acceptor role is filled by K191. Residue R255 participates in NADPH binding. NADPH is bound by residues V279 and E281.

The protein belongs to the NAD-dependent glycerol-3-phosphate dehydrogenase family.

It is found in the cytoplasm. It catalyses the reaction sn-glycerol 3-phosphate + NAD(+) = dihydroxyacetone phosphate + NADH + H(+). The enzyme catalyses sn-glycerol 3-phosphate + NADP(+) = dihydroxyacetone phosphate + NADPH + H(+). Its pathway is membrane lipid metabolism; glycerophospholipid metabolism. Functionally, catalyzes the reduction of the glycolytic intermediate dihydroxyacetone phosphate (DHAP) to sn-glycerol 3-phosphate (G3P), the key precursor for phospholipid synthesis. The chain is Glycerol-3-phosphate dehydrogenase [NAD(P)+] from Pseudomonas savastanoi pv. phaseolicola (strain 1448A / Race 6) (Pseudomonas syringae pv. phaseolicola (strain 1448A / Race 6)).